A 136-amino-acid polypeptide reads, in one-letter code: Large ribosomal subunit protein uL16 (136 aa).

This sequence belongs to the universal ribosomal protein uL16 family. Part of the 50S ribosomal subunit.

In terms of biological role, binds 23S rRNA and is also seen to make contacts with the A and possibly P site tRNAs. The polypeptide is Large ribosomal subunit protein uL16 (Orientia tsutsugamushi (strain Ikeda) (Rickettsia tsutsugamushi)).